Reading from the N-terminus, the 315-residue chain is NADH-ubiquinone oxidoreductase chain 1 (315 aa).

Helical transmembrane passes span 6–26 (FILS…SVAF), 80–100 (ISPI…PFFV), 107–127 (LGGL…MIAG), 153–173 (LALI…MYFF), 177–197 (IYIW…TISL), 229–249 (LIFM…CVIF), 253–273 (DVFN…FIWA), and 292–312 (CFLS…ILLF).

The protein belongs to the complex I subunit 1 family.

It is found in the mitochondrion inner membrane. The catalysed reaction is a ubiquinone + NADH + 5 H(+)(in) = a ubiquinol + NAD(+) + 4 H(+)(out). Core subunit of the mitochondrial membrane respiratory chain NADH dehydrogenase (Complex I) that is believed to belong to the minimal assembly required for catalysis. Complex I functions in the transfer of electrons from NADH to the respiratory chain. The immediate electron acceptor for the enzyme is believed to be ubiquinone. The polypeptide is NADH-ubiquinone oxidoreductase chain 1 (mt:ND1) (Drosophila persimilis (Fruit fly)).